The chain runs to 205 residues: MSEIKLNYHKTHFLTSAPNIRSIPEDTGIEIAFAGRSNAGKSTALNALTNQKNLARTSKTPGRTQLINLFEVEPNCKLVDLPGYGYAAVPEQMKIQWQKSLGEYLQKRECLAGLVVLMDIRHPLKDLDQQMIEWAVSANLPVLLLLTKADKLSQSARSKQVKMVREAILPFQGDIQVEAFSAQNKIGIDKLAVKLDFWFSPLFAE.

One can recognise an EngB-type G domain in the interval 27–201 (TGIEIAFAGR…AVKLDFWFSP (175 aa)). Residues 35-42 (GRSNAGKS), 62-66 (GRTQL), 80-83 (DLPG), 147-150 (TKAD), and 180-182 (FSA) each bind GTP. 2 residues coordinate Mg(2+): Ser-42 and Thr-64.

This sequence belongs to the TRAFAC class TrmE-Era-EngA-EngB-Septin-like GTPase superfamily. EngB GTPase family. Mg(2+) is required as a cofactor.

Its function is as follows. Necessary for normal cell division and for the maintenance of normal septation. This is Probable GTP-binding protein EngB from Haemophilus influenzae (strain PittGG).